The following is a 398-amino-acid chain: Na(+)/H(+) antiporter NhaA (398 aa).

A run of 12 helical transmembrane segments spans residues 21-41 (AGGI…NSPL), 56-76 (LSVS…LVGL), 94-114 (VLPG…YVFI), 124-144 (GWAI…SLLG), 153-173 (VFLT…IAIF), 176-196 (SGLS…LVVL), 201-221 (VMTL…VLKS), 263-283 (IVPF…SLAG), 284-304 (LSLG…LVVG), 306-326 (LVGV…DLPA), 333-353 (MIGI…IGLL), and 367-387 (VGIL…LLMA).

This sequence belongs to the NhaA Na(+)/H(+) (TC 2.A.33) antiporter family.

The protein localises to the cell inner membrane. It catalyses the reaction Na(+)(in) + 2 H(+)(out) = Na(+)(out) + 2 H(+)(in). In terms of biological role, na(+)/H(+) antiporter that extrudes sodium in exchange for external protons. This Mesorhizobium japonicum (strain LMG 29417 / CECT 9101 / MAFF 303099) (Mesorhizobium loti (strain MAFF 303099)) protein is Na(+)/H(+) antiporter NhaA.